The chain runs to 216 residues: Pentapeptide repeat protein VPA0095 (216 aa).

This sequence belongs to the pentapeptide repeat protein family.

In terms of biological role, has no effect when overexpressed in E.coli. When Cys-115 is mutated to Tyr and overexpressed it increases (fluoro)quinolone resistance in E.coli up to 16-fold for ciprofloxacin, levofloxacin and nalidixic acid. In Vibrio parahaemolyticus serotype O3:K6 (strain RIMD 2210633), this protein is Pentapeptide repeat protein VPA0095.